The primary structure comprises 202 residues: Protein phosphatase inhibitor 2 family member C (202 aa).

Disordered regions lie at residues 1 to 51 and 71 to 118; these read MSAS…DESS and PGTS…EQES. A required for binding PPP1CC region spans residues 12-17; that stretch reads KGILKN. Residues 19 to 35 are compositionally biased toward low complexity; sequence SSSGSSVATSGQQSGGT. The segment at 43–55 is required for binding PPP1CC; the sequence is KSQKWDESSILAA. Positions 71-80 are enriched in polar residues; it reads PGTSYMSVQD. Residues 84–112 show a composition bias toward basic and acidic residues; it reads DSVRDVEGEDSVRGVEGKEATDASDHSCE. The required for binding PPP1CC catalytic center, displacing metal ions and inhibition of PPP1CC catalytic activity stretch occupies residues 144–147; sequence HYNE. The segment at 162–202 is disordered; sequence LQSEDNENEETPQGTNEEKTAAEESEEAPLTGGLQTQSCDP.

This sequence belongs to the protein phosphatase inhibitor 2 family. As to expression, detected in sperm (at protein level).

Its function is as follows. Functions as a protein phosphatase inhibitor. It inhibits activity of the catalytic subunit of PP1 and weakly inhibits the activity of myosin-associated phosphates. The sequence is that of Protein phosphatase inhibitor 2 family member C from Homo sapiens (Human).